Reading from the N-terminus, the 1354-residue chain is High molecular weight rhoptry protein 2 (1354 aa).

The first 20 residues, 1–20 (MVKLSGIILLSLVWLKLNNS), serve as a signal peptide directing secretion. Disulfide bonds link Cys50–Cys75 and Cys220–Cys227. The chain crosses the membrane as a helical span at residues 716 to 736 (LIFAAYMLTLVFFIESQIDIS). 3 cysteine pairs are disulfide-bonded: Cys768–Cys828, Cys848–Cys889, and Cys924–Cys1011.

Component of the RhopH complex. RhopH complex is composed of CLAG3.1/CLAG3.2, RhopH2 and RhopH3 with a 1:1:1 subunit stoichiometry. Interacts with CLAG3.1/CLAG3.2.

The protein resides in the host cell membrane. The protein localises to the parasitophorous vacuole membrane. It localises to the host cytoplasm. It is found in the cytoplasm. Its subcellular location is the cytoplasmic vesicle. The protein resides in the secretory vesicle. The protein localises to the rhoptry. Participates in the formation of new permeability pathways in Plasmodium-infected erythrocytes enabling the uptake of nutrients from the blood plasma. Required for maintaining invasion capacity of merozoites. Required for parasite growth and proliferation. This Plasmodium berghei (strain Anka) protein is High molecular weight rhoptry protein 2.